A 1006-amino-acid chain; its full sequence is MSRRKQSNPRQIKRSLGDMEAREEVQLVGASHMEQKATAPEAPSPPSADVNSPPPLPPPTSPGGPKELEGQEPEPRPTEEEPGSPWSGPDELEPVVQDGQRRIRARLSLATGLSWGPFHGSVQTRASSPRQAEPSPALTLLLVDEACWLRTLPQALTEAEANTEIHRKDDALWCRVTKPVPAGGLLSVLLTAEPHSTPGHPVKKEPAEPTCPAPAHDLQLLPQQAGMASILATAVINKDVFPCKDCGIWYRSERNLQAHLLYYCASRQGTGSPAAAATDEKPKETYPNERVCPFPQCRKSCPSASSLEIHMRSHSGERPFVCLICLSAFTTKANCERHLKVHTDTLSGVCHSCGFISTTRDILYSHLVTNHMVCQPGSKGEIYSPGAGHPATKLPPDSLGSFQQQHTALQGPLASADLGLAPTPSPGLDRKALAEATNGEARAEPLAQNGGSSEPPAAPRSIKVEAVEEPEAAPILGPGEPGPQAPSRTPSPRSPAPARVKAELSSPTPGSSPVPGELGLAGALFLPQYVFGPDAAPPASEILAKMSELVHSRLQQGAGAGAGGAQTGLFPGAPKGATCFECEITFSNVNNYYVHKRLYCSGRRAPEDAPAARRPKAPPGPARAPPGQPAEPDAPRSSPGPGAREEGAGGAATPEDGAGGRGSEGSQSPGSSVDDAEDDPSRTLCEACNIRFSRHETYTVHKRYYCASRHDPPPRRPAAPPGPPGPAAPPAPSPAAPVRTRRRRKLYELHAAGAPPPPPPGHAPAPESPRPGSGSGSGPGLAPARSPGPAADGPIDLSKKPRRPLPGAPAPALADYHECTACRVSFHSLEAYLAHKKYSCPAAPPPGALGLPAAACPYCPPNGPVRGDLLEHFRLAHGLLLGAPLAGPGVEARTPADRGPSPAPAPAASPQPGSRGPRDGLGPEPQEPPPGPPPSPAAAPEAVPPPPAPPSYSDKGVQTPSKGTPAPLPNGNHRYCRLCNIKFSSLSTFIAHKKYYCSSHAAEHVK.

Basic residues predominate over residues 1 to 13 (MSRRKQSNPRQIK). 2 disordered regions span residues 1–93 (MSRR…DELE) and 114–133 (SWGP…RQAE). Positions 15-25 (SLGDMEAREEV) are enriched in basic and acidic residues. Positions 42–62 (APSPPSADVNSPPPLPPPTSP) are enriched in pro residues. The segment covering 66 to 79 (KELEGQEPEPRPTE) has biased composition (basic and acidic residues). 2 positions are modified to phosphoserine: S84 and S128. Residues 121–130 (SVQTRASSPR) are compositionally biased toward polar residues. A CCHC FOG-type 1 zinc finger spans residues 235–268 (VINKDVFPCKDCGIWYRSERNLQAHLLYYCASRQ). 4 residues coordinate Zn(2+): C243, C246, H259, and C264. S272 bears the Phosphoserine mark. 3 C2H2-type zinc fingers span residues 290–314 (RVCP…MRSH), 320–342 (FVCL…LKVH), and 348–371 (GVCH…VTNH). Residues 330–341 (TTKANCERHLKV) are interaction with TACC3. Phosphoserine is present on S384. 3 disordered regions span residues 384–409 (SPGA…HTAL), 438–460 (NGEA…AAPR), and 473–515 (APIL…SPVP). The segment covering 485 to 515 (APSRTPSPRSPAPARVKAELSSPTPGSSPVP) has biased composition (low complexity). Phosphoserine is present on residues S491 and S494. Residues 571 to 604 (PGAPKGATCFECEITFSNVNNYYVHKRLYCSGRR) form a CCHC FOG-type 2 zinc finger. Residues C579, C582, H595, and C600 each contribute to the Zn(2+) site. Positions 605-681 (APEDAPAARR…SVDDAEDDPS (77 aa)) are disordered. Over residues 617 to 629 (APPGPARAPPGQP) the composition is skewed to pro residues. Phosphoserine occurs at positions 638 and 671. The CCHC FOG-type 3 zinc-finger motif lies at 677-710 (EDDPSRTLCEACNIRFSRHETYTVHKRYYCASRH). Positions 685, 688, 701, and 706 each coordinate Zn(2+). A disordered region spans residues 708 to 810 (SRHDPPPRRP…PRRPLPGAPA (103 aa)). Composition is skewed to pro residues over residues 715-735 (RRPA…PSPA) and 754-769 (APPP…PESP). Residues 780–791 (GLAPARSPGPAA) are compositionally biased toward low complexity. Residue S786 is modified to Phosphoserine. The interval 794 to 800 (PIDLSKK) is interaction with CTBP2. The CCHC FOG-type 4 zinc finger occupies 811-844 (PALADYHECTACRVSFHSLEAYLAHKKYSCPAAP). Residues C819, C822, H835, and C840 each coordinate Zn(2+). The C2H2-type 4 zinc finger occupies 854 to 877 (AACPYCPPNGPVRGDLLEHFRLAH). A disordered region spans residues 889-971 (GVEARTPADR…KGTPAPLPNG (83 aa)). Residues S901, S909, S914, and S935 each carry the phosphoserine modification. Residues 925 to 950 (PQEPPPGPPPSPAAAPEAVPPPPAPP) show a composition bias toward pro residues. A CCHC FOG-type 5 zinc finger spans residues 968 to 1001 (LPNGNHRYCRLCNIKFSSLSTFIAHKKYYCSSHA). 4 residues coordinate Zn(2+): C976, C979, H992, and C997.

The protein belongs to the FOG (Friend of GATA) family. Interacts with corepressor CTBP2; this interaction is however not essential for corepressor activity. Interacts with the N-terminal zinc-finger of GATA1, GATA2 and probably GATA3. As to expression, mainly expressed in hematopoietic tissues. Also expressed in adult cerebellum, stomach, lymph node, liver and pancreas. Expressed in fetal heart, liver and spleen.

It localises to the nucleus. In terms of biological role, transcription regulator that plays an essential role in erythroid and megakaryocytic cell differentiation. Essential cofactor that acts via the formation of a heterodimer with transcription factors of the GATA family GATA1, GATA2 and GATA3. Such heterodimer can both activate or repress transcriptional activity, depending on the cell and promoter context. The heterodimer formed with GATA proteins is essential to activate expression of genes such as NFE2, ITGA2B, alpha- and beta-globin, while it represses expression of KLF1. May be involved in regulation of some genes in gonads. May also be involved in cardiac development, in a non-redundant way with ZFPM2/FOG2. This is Zinc finger protein ZFPM1 (ZFPM1) from Homo sapiens (Human).